A 332-amino-acid chain; its full sequence is Formamidase (332 aa).

Positions 14-259 constitute a CN hydrolase domain; it reads FLTALIQYPV…WEIVTAEVYP (246 aa). The active-site Proton acceptor is the E60. The active-site Proton donor is K132. C165 functions as the Nucleophile in the catalytic mechanism.

It belongs to the carbon-nitrogen hydrolase superfamily. Aliphatic amidase family.

It carries out the reaction formamide + H2O = formate + NH4(+). Is an aliphatic amidase with a restricted substrate specificity, as it only hydrolyzes formamide. The protein is Formamidase of Bacillus thuringiensis (strain Al Hakam).